We begin with the raw amino-acid sequence, 508 residues long: GMP synthase [glutamine-hydrolyzing] (508 aa).

One can recognise a Glutamine amidotransferase type-1 domain in the interval 1–189 (MILVLDFGSQ…ALLVCGCEKT (189 aa)). Catalysis depends on Cys78, which acts as the Nucleophile. Residues His163 and Glu165 contribute to the active site. The region spanning 190–383 (WGMQHFAQRE…LGVSQDFLMR (194 aa)) is the GMPS ATP-PPase domain. Residue 217–223 (SGGVDST) coordinates ATP.

Homodimer.

It catalyses the reaction XMP + L-glutamine + ATP + H2O = GMP + L-glutamate + AMP + diphosphate + 2 H(+). Its pathway is purine metabolism; GMP biosynthesis; GMP from XMP (L-Gln route): step 1/1. Catalyzes the synthesis of GMP from XMP. In Helicobacter pylori (strain ATCC 700392 / 26695) (Campylobacter pylori), this protein is GMP synthase [glutamine-hydrolyzing] (guaA).